A 358-amino-acid polypeptide reads, in one-letter code: Photosystem II protein D1 3 (358 aa).

3 consecutive transmembrane segments (helical) span residues 28–45, 117–132, and 141–155; these read YIGWFGVLMIPCLLAATT, HFLIGISAYMGRQWEL, and WICVAYSAPLSAAMA. Chlorophyll a is bound at residue His-117. Tyr-125 provides a ligand contact to pheophytin a. [CaMn4O5] cluster is bound by residues Asp-169 and Glu-188. The helical transmembrane segment at 196–217 threads the bilayer; it reads FHMLGVAGVFGGSLFSAMHGSL. A chlorophyll a-binding site is contributed by His-197. Residues His-214 and 263 to 264 contribute to the a quinone site; that span reads SF. Fe cation is bound at residue His-214. His-271 contributes to the Fe cation binding site. The chain crosses the membrane as a helical span at residues 273–287; the sequence is LLGAWPVVGIWFTSM. Residues His-331, Glu-332, Asp-341, and Ala-343 each coordinate [CaMn4O5] cluster. Residues 344 to 358 constitute a propeptide that is removed on maturation; the sequence is TVESTPVALQAPAIG.

Belongs to the reaction center PufL/M/PsbA/D family. In terms of assembly, PSII is composed of 1 copy each of membrane proteins PsbA, PsbB, PsbC, PsbD, PsbE, PsbF, PsbH, PsbI, PsbJ, PsbK, PsbL, PsbM, PsbT, PsbX, PsbY, PsbZ, Psb30/Ycf12, peripheral proteins PsbO, CyanoQ (PsbQ), PsbU, PsbV and a large number of cofactors. It forms dimeric complexes. Requires The D1/D2 heterodimer binds P680, chlorophylls that are the primary electron donor of PSII, and subsequent electron acceptors. It shares a non-heme iron and each subunit binds pheophytin, quinone, additional chlorophylls, carotenoids and lipids. D1 provides most of the ligands for the Mn4-Ca-O5 cluster of the oxygen-evolving complex (OEC). There is also a Cl(-1) ion associated with D1 and D2, which is required for oxygen evolution. The PSII complex binds additional chlorophylls, carotenoids and specific lipids. as cofactor. In terms of processing, tyr-160 forms a radical intermediate that is referred to as redox-active TyrZ, YZ or Y-Z. Post-translationally, C-terminally processed by CtpA; processing is essential to allow assembly of the oxygen-evolving complex and thus photosynthetic growth.

It is found in the cellular thylakoid membrane. It carries out the reaction 2 a plastoquinone + 4 hnu + 2 H2O = 2 a plastoquinol + O2. Its function is as follows. Photosystem II (PSII) is a light-driven water:plastoquinone oxidoreductase that uses light energy to abstract electrons from H(2)O, generating O(2) and a proton gradient subsequently used for ATP formation. It consists of a core antenna complex that captures photons, and an electron transfer chain that converts photonic excitation into a charge separation. The D1/D2 (PsbA/PsbD) reaction center heterodimer binds P680, the primary electron donor of PSII as well as several subsequent electron acceptors. This chain is Photosystem II protein D1 3, found in Synechococcus sp. (strain CC9311).